Here is a 320-residue protein sequence, read N- to C-terminus: Arginine/serine-rich protein 1 (320 aa).

Residues Met-1–Ala-22 show a composition bias toward basic and acidic residues. Disordered stretches follow at residues Met-1 to Arg-180 and Leu-215 to Val-299. 2 stretches are compositionally biased toward low complexity: residues Ser-24–Ser-48 and Thr-56–Arg-74. Composition is skewed to basic residues over residues Ser-75 to Ser-102, Arg-114 to Cys-158, and Arg-166 to Ser-175. 2 positions are modified to phosphoserine: Ser-135 and Ser-137. The span at Leu-215–Val-238 shows a compositional bias: basic and acidic residues. Over residues Val-271 to Thr-293 the composition is skewed to polar residues.

The protein belongs to the RSRP family. In terms of processing, phosphorylated. Phosphorylation at Ser-135 and Ser-137 mediates the interaction with spliceosome proteins.

The protein resides in the nucleus. Functionally, probably acts as a spliceosomal factor that contributes to spliceosome assembly and regulates the isoform switching of proteins such as PARP6. The chain is Arginine/serine-rich protein 1 (rsrp1) from Danio rerio (Zebrafish).